Reading from the N-terminus, the 273-residue chain is Dermonecrotic toxin LarSicTox-alphaVII1 (273 aa).

The active site involves His5. Mg(2+)-binding residues include Glu25 and Asp27. His41 functions as the Nucleophile in the catalytic mechanism. 2 disulfide bridges follow: Cys45–Cys51 and Cys47–Cys192. Asp85 contributes to the Mg(2+) binding site.

It belongs to the arthropod phospholipase D family. Class II subfamily. Requires Mg(2+) as cofactor. As to expression, expressed by the venom gland.

It is found in the secreted. The catalysed reaction is an N-(acyl)-sphingosylphosphocholine = an N-(acyl)-sphingosyl-1,3-cyclic phosphate + choline. The enzyme catalyses an N-(acyl)-sphingosylphosphoethanolamine = an N-(acyl)-sphingosyl-1,3-cyclic phosphate + ethanolamine. It carries out the reaction a 1-acyl-sn-glycero-3-phosphocholine = a 1-acyl-sn-glycero-2,3-cyclic phosphate + choline. It catalyses the reaction a 1-acyl-sn-glycero-3-phosphoethanolamine = a 1-acyl-sn-glycero-2,3-cyclic phosphate + ethanolamine. Its function is as follows. Dermonecrotic toxins cleave the phosphodiester linkage between the phosphate and headgroup of certain phospholipids (sphingolipid and lysolipid substrates), forming an alcohol (often choline) and a cyclic phosphate. This toxin acts on sphingomyelin (SM). It may also act on ceramide phosphoethanolamine (CPE), lysophosphatidylcholine (LPC) and lysophosphatidylethanolamine (LPE), but not on lysophosphatidylserine (LPS), and lysophosphatidylglycerol (LPG). It acts by transphosphatidylation, releasing exclusively cyclic phosphate products as second products. Induces dermonecrosis, hemolysis, increased vascular permeability, edema, inflammatory response, and platelet aggregation. This Loxosceles arizonica (Arizona brown spider) protein is Dermonecrotic toxin LarSicTox-alphaVII1.